The following is a 197-amino-acid chain: Nucleoside triphosphate pyrophosphatase (197 aa).

Asp-71 (proton acceptor) is an active-site residue.

It belongs to the Maf family. A divalent metal cation is required as a cofactor.

The protein localises to the cytoplasm. It carries out the reaction a ribonucleoside 5'-triphosphate + H2O = a ribonucleoside 5'-phosphate + diphosphate + H(+). The catalysed reaction is a 2'-deoxyribonucleoside 5'-triphosphate + H2O = a 2'-deoxyribonucleoside 5'-phosphate + diphosphate + H(+). Functionally, nucleoside triphosphate pyrophosphatase. May have a dual role in cell division arrest and in preventing the incorporation of modified nucleotides into cellular nucleic acids. The chain is Nucleoside triphosphate pyrophosphatase from Synechococcus sp. (strain JA-2-3B'a(2-13)) (Cyanobacteria bacterium Yellowstone B-Prime).